We begin with the raw amino-acid sequence, 359 residues long: Glutamate 5-kinase (359 aa).

Position 7 (lysine 7) interacts with ATP. Positions 47, 135, and 147 each coordinate substrate. An ATP-binding site is contributed by 202–208 (SGGITSK). One can recognise a PUA domain in the interval 266–343 (KGSIFINEGA…DQLEDVLGYS (78 aa)).

It belongs to the glutamate 5-kinase family.

Its subcellular location is the cytoplasm. The enzyme catalyses L-glutamate + ATP = L-glutamyl 5-phosphate + ADP. The protein operates within amino-acid biosynthesis; L-proline biosynthesis; L-glutamate 5-semialdehyde from L-glutamate: step 1/2. In terms of biological role, catalyzes the transfer of a phosphate group to glutamate to form L-glutamate 5-phosphate. The polypeptide is Glutamate 5-kinase (Kosmotoga olearia (strain ATCC BAA-1733 / DSM 21960 / TBF 19.5.1)).